Reading from the N-terminus, the 139-residue chain is Putative pre-16S rRNA nuclease (139 aa).

It belongs to the YqgF nuclease family.

The protein resides in the cytoplasm. Could be a nuclease involved in processing of the 5'-end of pre-16S rRNA. This chain is Putative pre-16S rRNA nuclease, found in Streptococcus pyogenes serotype M1.